Here is a 344-residue protein sequence, read N- to C-terminus: MANNVGVLLATDMQALPDSVEQWAIKNYEDKLSGGASLQVAKNILESSFKLEAGTSSMGAVVSLVQTPGLHSPAYLAEVARVLVSGGDLIVQEPLLAEAQEQKCSSAQTKAQLERNLLLAGFVNLEVVDSVVGVEIAKACTTSSVALNVVAVKSSKPSWDTGSVFQIRKKVSNQNGNFRTSGNYQPVKLTAGETVDDFPLNSKPAVKVDLSSDFKNDEEELIDEDDLLTEEDLKAPVLPAAESCAPTKKACKNCTCGRAELEEKEQETKLTTAQINNPTSSCGSCGLGDAFRCAGCPYRGMPTFKLGEKVFSGFLLWNQYIRSVPLISKLGNITLGGSLLVADA.

The N-terminal SAM-like domain stretch occupies residues 1-169; it reads MANNVGVLLA…DTGSVFQIRK (169 aa). A linker region spans residues 170-233; that stretch reads KVSNQNGNFR…EDDLLTEEDL (64 aa). [2Fe-2S] cluster is bound by residues Cys244, Cys251, Cys254, and Cys256. Residues 244-256 form a fe-S binding site A region; the sequence is CAPTKKACKNCTC. The [4Fe-4S] cluster site is built by Cys282, Cys285, Cys293, and Cys296. 2 consecutive short sequence motifs (cx2C motif) follow at residues 282-285 and 293-296; these read CGSC and CAGC. The interval 282–296 is fe-S binding site B; it reads CGSCGLGDAFRCAGC.

Belongs to the anamorsin family. As to quaternary structure, monomer. [2Fe-2S] cluster serves as cofactor. The cofactor is [4Fe-4S] cluster.

Its subcellular location is the cytoplasm. It is found in the mitochondrion intermembrane space. Functionally, component of the cytosolic iron-sulfur (Fe-S) protein assembly (CIA) machinery. Required for the maturation of extramitochondrial Fe-S proteins. Part of an electron transfer chain functioning in an early step of cytosolic Fe-S biogenesis, facilitating the de novo assembly of a [4Fe-4S] cluster on the cytosolic Fe-S scaffold complex. Electrons are transferred from NADPH via a FAD- and FMN-containing diflavin oxidoreductase. Together with the diflavin oxidoreductase, also required for the assembly of the diferric tyrosyl radical cofactor of ribonucleotide reductase (RNR), probably by providing electrons for reduction during radical cofactor maturation in the catalytic small subunit. In Physcomitrium patens (Spreading-leaved earth moss), this protein is Anamorsin homolog 1.